The following is a 451-amino-acid chain: Bifunctional protein GlmU (451 aa).

The interval 1 to 231 is pyrophosphorylase; sequence MDSPLAIIVL…ADEVAGINSR (231 aa). Residues 10-13, lysine 24, glutamine 74, 79-80, 102-104, glycine 142, glutamate 156, asparagine 171, and asparagine 229 each bind UDP-N-acetyl-alpha-D-glucosamine; these read LAAG, GT, and YGD. Position 104 (aspartate 104) interacts with Mg(2+). A Mg(2+)-binding site is contributed by asparagine 229. Positions 232-252 are linker; sequence GELAEAEGRWQQRRRAAAMAD. Residues 253-451 form an N-acetyltransferase region; it reads GASLIAPETV…MKKKKAEKKS (199 aa). UDP-N-acetyl-alpha-D-glucosamine contacts are provided by arginine 318 and lysine 336. The active-site Proton acceptor is histidine 348. 2 residues coordinate UDP-N-acetyl-alpha-D-glucosamine: tyrosine 351 and asparagine 362. Residues alanine 365, 371 to 372, serine 390, alanine 408, and arginine 425 each bind acetyl-CoA; that span reads NY.

This sequence in the N-terminal section; belongs to the N-acetylglucosamine-1-phosphate uridyltransferase family. The protein in the C-terminal section; belongs to the transferase hexapeptide repeat family. Homotrimer. The cofactor is Mg(2+).

It localises to the cytoplasm. It carries out the reaction alpha-D-glucosamine 1-phosphate + acetyl-CoA = N-acetyl-alpha-D-glucosamine 1-phosphate + CoA + H(+). The enzyme catalyses N-acetyl-alpha-D-glucosamine 1-phosphate + UTP + H(+) = UDP-N-acetyl-alpha-D-glucosamine + diphosphate. It participates in nucleotide-sugar biosynthesis; UDP-N-acetyl-alpha-D-glucosamine biosynthesis; N-acetyl-alpha-D-glucosamine 1-phosphate from alpha-D-glucosamine 6-phosphate (route II): step 2/2. Its pathway is nucleotide-sugar biosynthesis; UDP-N-acetyl-alpha-D-glucosamine biosynthesis; UDP-N-acetyl-alpha-D-glucosamine from N-acetyl-alpha-D-glucosamine 1-phosphate: step 1/1. It functions in the pathway bacterial outer membrane biogenesis; LPS lipid A biosynthesis. Its function is as follows. Catalyzes the last two sequential reactions in the de novo biosynthetic pathway for UDP-N-acetylglucosamine (UDP-GlcNAc). The C-terminal domain catalyzes the transfer of acetyl group from acetyl coenzyme A to glucosamine-1-phosphate (GlcN-1-P) to produce N-acetylglucosamine-1-phosphate (GlcNAc-1-P), which is converted into UDP-GlcNAc by the transfer of uridine 5-monophosphate (from uridine 5-triphosphate), a reaction catalyzed by the N-terminal domain. The protein is Bifunctional protein GlmU of Novosphingobium aromaticivorans (strain ATCC 700278 / DSM 12444 / CCUG 56034 / CIP 105152 / NBRC 16084 / F199).